The following is a 510-amino-acid chain: Ent-sandaracopimaradiene 3-hydroxylase (510 aa).

The helical transmembrane segment at 4-24 (MLVAGAGAAAVAAVGGLVAAA) threads the bilayer. Cysteine 454 serves as a coordination point for heme.

Belongs to the cytochrome P450 family. In terms of assembly, interacts with the rice dwarf virus (RDV) P2 protein. Requires heme as cofactor. In terms of tissue distribution, expressed in leaf blades and sheaths, stems and panicles.

Its subcellular location is the membrane. It carries out the reaction ent-sandaracopimara-8(14),15-diene + reduced [NADPH--hemoprotein reductase] + O2 = ent-sandaracopimaradien-3beta-ol + oxidized [NADPH--hemoprotein reductase] + H2O + H(+). The enzyme catalyses 9beta-pimara-7,15-diene + reduced [NADPH--hemoprotein reductase] + O2 = 9beta-pimara-7,15-diene-3beta-ol + oxidized [NADPH--hemoprotein reductase] + H2O + H(+). Catalyzes the hydroxylation of ent-sandaracopimaradiene at the C3alpha position to produce ent-3beta-hydroxy-sandaracopimaradiene, an intermediates for the biosynthesis of oryzalexin D and oryzalexin E phytoalexins. Catalyzes the hydroxylation of ent-cassadiene at the C3alpha position to produce 3alpha-hydroxy-ent-cassadiene, which may be an intermediate for the biosynthesis of phytocassane phytoalexins. Catalyzes the hydroxylation of syn-pimaradiene (9-beta-pimara-7,15-diene) at the C3beta position to produce 3-beta-syn-pimaradiene. Can hydroxylate ent-kaurene in vitro, but the product is not ent-kauren-19-ol as expected for ent-kaurene oxidase activity. In Oryza sativa subsp. japonica (Rice), this protein is Ent-sandaracopimaradiene 3-hydroxylase.